We begin with the raw amino-acid sequence, 341 residues long: TERF1-interacting nuclear factor 2 (341 aa).

Residue alanine 2 is modified to N-acetylalanine. A TBM motif is present at residues 243 to 265; the sequence is HRFNLAPLGKRKSRSHWTSAKAC. Residues 249–255 carry the Nuclear localization signal motif; that stretch reads PLGKRKS. The segment at 283–341 is disordered; that stretch reads PAQDLSNPKSREEPGAASAASVGTEPVCTEEAKTPSRPLGKRALEETPPDSPAASRRTV.

As to quaternary structure, monomer. Found in a complex with POT1; TERF1 and TNKS1. Component of the shelterin complex (telosome) composed of TERF1, TERF2, TINF2, TERF2IP, ACD and POT1. Interacts with TERF1.

It is found in the nucleus. Its subcellular location is the chromosome. The protein resides in the telomere. In terms of biological role, component of the shelterin complex (telosome) that is involved in the regulation of telomere length and protection. Shelterin associates with arrays of double-stranded TTAGGG repeats added by telomerase and protects chromosome ends; without its protective activity, telomeres are no longer hidden from the DNA damage surveillance and chromosome ends are inappropriately processed by DNA repair pathways. Plays a role in shelterin complex assembly. This is TERF1-interacting nuclear factor 2 (Tinf2) from Mus musculus (Mouse).